Here is a 353-residue protein sequence, read N- to C-terminus: Photosystem II D2 protein (353 aa).

Thr-2 carries the post-translational modification N-acetylthreonine. At Thr-2 the chain carries Phosphothreonine. The helical transmembrane segment at 41–61 (CAYFALGGWFTGTTFVTSWYT) threads the bilayer. His-118 serves as a coordination point for chlorophyll a. A helical membrane pass occupies residues 125–141 (GFMLRQFELARSVQLRP). Pheophytin a is bound by residues Gln-130 and Asn-143. A helical membrane pass occupies residues 153–166 (VFVSVFLIYPLGQS). Position 198 (His-198) interacts with chlorophyll a. The chain crosses the membrane as a helical span at residues 208 to 228 (AALLCAIHGATVENTLFEDGD). A plastoquinone is bound by residues His-215 and Phe-262. His-215 contributes to the Fe cation binding site. His-269 is a Fe cation binding site. A helical transmembrane segment spans residues 279–295 (GLWMSAIGVVGLALNLR).

The protein belongs to the reaction center PufL/M/PsbA/D family. As to quaternary structure, PSII is composed of 1 copy each of membrane proteins PsbA, PsbB, PsbC, PsbD, PsbE, PsbF, PsbH, PsbI, PsbJ, PsbK, PsbL, PsbM, PsbT, PsbX, PsbY, PsbZ, Psb30/Ycf12, at least 3 peripheral proteins of the oxygen-evolving complex and a large number of cofactors. It forms dimeric complexes. The D1/D2 heterodimer binds P680, chlorophylls that are the primary electron donor of PSII, and subsequent electron acceptors. It shares a non-heme iron and each subunit binds pheophytin, quinone, additional chlorophylls, carotenoids and lipids. There is also a Cl(-1) ion associated with D1 and D2, which is required for oxygen evolution. The PSII complex binds additional chlorophylls, carotenoids and specific lipids. serves as cofactor.

It localises to the plastid. The protein resides in the chloroplast thylakoid membrane. It catalyses the reaction 2 a plastoquinone + 4 hnu + 2 H2O = 2 a plastoquinol + O2. In terms of biological role, photosystem II (PSII) is a light-driven water:plastoquinone oxidoreductase that uses light energy to abstract electrons from H(2)O, generating O(2) and a proton gradient subsequently used for ATP formation. It consists of a core antenna complex that captures photons, and an electron transfer chain that converts photonic excitation into a charge separation. The D1/D2 (PsbA/PsbD) reaction center heterodimer binds P680, the primary electron donor of PSII as well as several subsequent electron acceptors. D2 is needed for assembly of a stable PSII complex. In Phalaenopsis aphrodite subsp. formosana (Moth orchid), this protein is Photosystem II D2 protein.